A 189-amino-acid polypeptide reads, in one-letter code: Protein shisa-like-2A (189 aa).

2 helical membrane-spanning segments follow: residues 48–68 (SFFPYEHNYMWWLSIGALVGL) and 70–90 (TAAVVLLAFLITACVLCYLFI). The interval 98–189 (LDPGLSLQTT…PTPGPHGPVP (92 aa)) is disordered. The span at 140-171 (NTHLESNKKQTVSPTCLPQNQFMATVTASNIP) shows a compositional bias: polar residues.

This sequence belongs to the shisa family.

The protein resides in the membrane. In Mus musculus (Mouse), this protein is Protein shisa-like-2A (Shisal2a).